The chain runs to 364 residues: Ferrochelatase (364 aa).

Positions 210 and 291 each coordinate Fe cation.

The protein belongs to the ferrochelatase family.

Its subcellular location is the cytoplasm. It catalyses the reaction heme b + 2 H(+) = protoporphyrin IX + Fe(2+). The protein operates within porphyrin-containing compound metabolism; protoheme biosynthesis; protoheme from protoporphyrin-IX: step 1/1. In terms of biological role, catalyzes the ferrous insertion into protoporphyrin IX. This is Ferrochelatase from Idiomarina loihiensis (strain ATCC BAA-735 / DSM 15497 / L2-TR).